Consider the following 758-residue polypeptide: Microtubule-associated protein tau (758 aa).

The segment covering 1–26 has biased composition (basic and acidic residues); the sequence is MAEPRQEFEVMEDHAGTYGLGDRKDQ. The segment at 1 to 573 is disordered; that stretch reads MAEPRQEFEV…PVPMPDLKNV (573 aa). N-acetylalanine is present on Ala-2. Tyr-18 carries the post-translational modification Phosphotyrosine; by FYN. At Tyr-29 the chain carries Phosphotyrosine. A Glycyl lysine isopeptide (Lys-Gly) (interchain with G-Cter in ubiquitin) cross-link involves residue Lys-44. A phosphoserine mark is found at Ser-46 and Ser-61. Polar residues predominate over residues 61–71; sequence SETSDAKSTPT. 2 positions are modified to phosphothreonine: Thr-69 and Thr-71. Lys-87 is a glycosylation site (N-linked (Glc) (glycation) lysine; in PHF-tau; in vitro). Thr-111 carries the post-translational modification Phosphothreonine. 2 stretches are compositionally biased toward basic and acidic residues: residues 179-189 and 207-216; these read EGGRHAPELLK and GGKERPGSKE. Ser-214 carries the phosphoserine; by SGK1 modification. Residues 217 to 228 are compositionally biased toward acidic residues; sequence EVDEDRDVDESS. A compositionally biased stretch (basic and acidic residues) spans 314 to 323; it reads EQAHSEEHLG. The segment covering 324–340 has biased composition (low complexity); sequence RAAFPGAPGEGPEARGP. Basic and acidic residues-rich tracts occupy residues 344 to 356 and 381 to 393; these read EDTK…EPSE and KSKD…DKKA. Lys-383 is a glycosylation site (N-linked (Glc) (glycation) lysine; in PHF-tau; in vitro). The span at 442–453 shows a compositional bias: low complexity; sequence VSSVTSRTGSSG. Basic and acidic residues predominate over residues 455–466; that stretch reads KEMKLKGADGKT. Residue Lys-467 is glycosylated (N-linked (Glc) (glycation) lysine; in PHF-tau; in vitro). At Thr-470 the chain carries Phosphothreonine; by PDPK1. Arg-472 is modified (omega-N-methylarginine). Residue Lys-480 is glycosylated (N-linked (Glc) (glycation) lysine; in PHF-tau; in vitro). N6,N6-dimethyllysine; alternate is present on Lys-480. Lys-480 is subject to N6-acetyllysine; alternate. A Deamidated asparagine; in tau and PHF-tau; partial modification is found at Asn-484. Phosphothreonine is present on Thr-486. Lys-491 carries an N-linked (Glc) (glycation) lysine; in PHF-tau; in vitro glycan. Positions 491–503 are enriched in pro residues; that stretch reads KTPPAPKTPPSSG. The residue at position 492 (Thr-492) is a Phosphothreonine. Phosphothreonine; by PDPK1 is present on Thr-498. Residues Ser-502, Ser-508, and Ser-512 each carry the phosphoserine modification. Residues 504-531 show a composition bias toward low complexity; sequence EPPKSGDRSGYSSPGSPGTPGSRSRTPS. Tyr-514 carries the phosphotyrosine; by TTBK1 modification. Phosphoserine; by PDPK1 and TTBK1 is present on residues Ser-515 and Ser-516. Residue Ser-519 is modified to Phosphoserine; by CK1, PDPK1 and TTBK1. Thr-522 is subject to Phosphothreonine; by CK1 and PDPK1. A glycan (O-linked (GlcNAc) serine) is linked at Ser-525. At Thr-529 the chain carries Phosphothreonine; by BRSK1, BRSK2, DYRK2 and PDPK1. At Ser-531 the chain carries Phosphoserine; by PKA. Residue Thr-534 is modified to Phosphothreonine; by PDPK1. Lys-542 is a glycosylation site (N-linked (Glc) (glycation) lysine; in PHF-tau; in vitro). Lys-542 bears the N6-acetyllysine mark. Position 548 is a phosphothreonine; by GSK3-beta and PDPK1 (Thr-548). Residue Lys-551 is glycosylated (N-linked (Glc) (glycation) lysine; in PHF-tau; in vitro). A Phosphoserine; by PDPK1 modification is found at Ser-552. Ser-554 bears the Phosphoserine; by PHK mark. Residue Ser-555 is glycosylated (O-linked (GlcNAc) serine). Tau/MAP repeat units follow at residues 561-591, 592-622, 623-653, and 654-685; these read QTAP…GGGK, VQII…GGGS, VQIV…GGGQ, and VEVK…GGGN. The interval 561-685 is microtubule-binding domain; that stretch reads QTAPVPMPDL…NITHVPGGGN (125 aa). Lys-571 is covalently cross-linked (Glycyl lysine isopeptide (Lys-Gly) (interchain with G-Cter in ubiquitin); in PHF-tau). The N-linked (Glc) (glycation) lysine; in PHF-tau; in vitro glycan is linked to Lys-576. Residue Lys-576 is modified to N6-acetyllysine; alternate. N6-methyllysine; alternate is present on Lys-576. Lys-576 is covalently cross-linked (Glycyl lysine isopeptide (Lys-Gly) (interchain with G-Cter in ubiquitin); alternate). Ser-579 carries the post-translational modification Phosphoserine; by MARK1, MARK2, MARK3, MARK4, BRSK1, BRSK2 and PHK. Residue Lys-584 forms a Glycyl lysine isopeptide (Lys-Gly) (interchain with G-Cter in ubiquitin) linkage. Asn-596 bears the Deamidated asparagine; in tau and PHF-tau; partial mark. N-linked (Glc) (glycation) lysine; in PHF-tau; in vitro glycans are attached at residues Lys-597 and Lys-598. Residue Lys-598 is modified to N6-acetyllysine; alternate. Residue Lys-598 forms a Glycyl lysine isopeptide (Lys-Gly) (interchain with G-Cter in ubiquitin); alternate linkage. Residue Ser-602 is modified to Phosphoserine; by PHK. N6-acetyllysine is present on Lys-607. A disulfide bridge links Cys-608 with Cys-639. Residue Ser-610 is modified to Phosphoserine. Residue Lys-615 is modified to N6-acetyllysine; alternate. Residue Lys-615 forms a Glycyl lysine isopeptide (Lys-Gly) (interchain with G-Cter in ubiquitin); alternate linkage. Ser-622 bears the Phosphoserine; by PHK mark. Lys-628 is subject to N6,N6-dimethyllysine; alternate. Residues Lys-628, Lys-634, and Lys-638 each carry the N6-acetyllysine; alternate modification. A Glycyl lysine isopeptide (Lys-Gly) (interchain with G-Cter in ubiquitin); in PHF-tau cross-link involves residue Lys-628. Glycyl lysine isopeptide (Lys-Gly) (interchain with G-Cter in ubiquitin); alternate cross-links involve residues Lys-634 and Lys-638. Position 641 is a phosphoserine (Ser-641). 3 positions are modified to N6-acetyllysine; alternate: Lys-648, Lys-660, and Lys-664. Glycyl lysine isopeptide (Lys-Gly) (interchain with G-Cter in ubiquitin); alternate cross-links involve residues Lys-648, Lys-660, and Lys-664. Lys-664 carries an N-linked (Glc) (glycation) lysine; in PHF-tau; in vitro glycan. Arg-666 carries the omega-N-methylarginine modification. Ser-669 is modified (phosphoserine; by PHK). A glycan (N-linked (Glc) (glycation) lysine; in PHF-tau; in vitro) is linked at Lys-670. Residue Lys-670 forms a Glycyl lysine isopeptide (Lys-Gly) (interchain with G-Cter in ubiquitin); in PHF-tau linkage. The residue at position 673 (Ser-673) is a Phosphoserine. An N-linked (Glc) (glycation) lysine; in PHF-tau; in vitro glycan is attached at Lys-686. Position 686 is an N6-acetyllysine; alternate (Lys-686). Residue Lys-686 forms a Glycyl lysine isopeptide (Lys-Gly) (interchain with G-Cter in ubiquitin); alternate linkage. A Glycyl lysine isopeptide (Lys-Gly) (interchain with G-Cter in ubiquitin) cross-link involves residue Lys-692. Lys-702 carries the post-translational modification N6-acetyllysine; alternate. Lys-702 is covalently cross-linked (Glycyl lysine isopeptide (Lys-Gly) (interchain with G-Cter in ubiquitin); alternate). The residue at position 711 (Tyr-711) is a Phosphotyrosine. Residue Ser-713 is modified to Phosphoserine; by CK1 and PDPK1. Residues 715 to 734 form a disordered region; sequence VVSGDTSPRHLSNVSSTGSI. Residue Ser-717 is modified to Phosphoserine; alternate. Ser-717 carries O-linked (GlcNAc) serine; alternate glycosylation. The span at 718 to 733 shows a compositional bias: polar residues; it reads GDTSPRHLSNVSSTGS. Thr-720 carries the post-translational modification Phosphothreonine. Phosphoserine; by CK1 and PDPK1 is present on Ser-721. Phosphoserine is present on Ser-726. A Phosphoserine; by CaMK2 and TTBK1 modification is found at Ser-733. The residue at position 739 (Ser-739) is a Phosphoserine; by PDPK1 and TTBK1. The residue at position 744 (Thr-744) is a Phosphothreonine; by TTBK1.

In terms of assembly, interacts with MARK1, MARK2, MARK3 and MARK4. Interacts with PSMC2 through SQSTM1. Interacts with SQSTM1 when polyubiquitinated. Interacts with FKBP4. Binds to CSNK1D. Interacts with SGK1. Interacts with EPM2A; the interaction dephosphorylates MAPT at Ser-396. Interacts with PIN1. Interacts with LRRK2. Interacts with LRP1, leading to endocytosis; this interaction is reduced in the presence of LRPAP1/RAP. Post-translationally, phosphorylation at serine and threonine residues in S-P or T-P motifs by proline-directed protein kinases (PDPK1, CDK1, CDK5, GSK3, MAPK) (only 2-3 sites per protein in interphase, seven-fold increase in mitosis, and in the form associated with paired helical filaments (PHF-tau)), and at serine residues in K-X-G-S motifs by MAP/microtubule affinity-regulating kinase (MARK1, MARK2, MARK3 or MARK4), causing detachment from microtubules, and their disassembly. Phosphorylation decreases with age. Phosphorylation within tau/MAP's repeat domain or in flanking regions seems to reduce tau/MAP's interaction with, respectively, microtubules or plasma membrane components. Phosphorylation on Ser-610, Ser-622, Ser-641 and Ser-673 in several isoforms during mitosis. Phosphorylation at Ser-548 by GSK3B reduces ability to bind and stabilize microtubules. Phosphorylation at Ser-579 by BRSK1 and BRSK2 in neurons affects ability to bind microtubules and plays a role in neuron polarization. Phosphorylated at Ser-554, Ser-579, Ser-602, Ser-606 and Ser-669 by PHK. Phosphorylation at Ser-214 by SGK1 mediates microtubule depolymerization and neurite formation in hippocampal neurons. There is a reciprocal down-regulation of phosphorylation and O-GlcNAcylation. Phosphorylation on Ser-717 completely abolishes the O-GlcNAcylation on this site, while phosphorylation on Ser-713 and Ser-721 reduces glycosylation by a factor of 2 and 4 respectively. Phosphorylation on Ser-721 is reduced by about 41.5% by GlcNAcylation on Ser-717. Dephosphorylated at several serine and threonine residues by the serine/threonine phosphatase PPP5C. Polyubiquitinated. Requires functional TRAF6 and may provoke SQSTM1-dependent degradation by the proteasome. PHF-tau can be modified by three different forms of polyubiquitination. 'Lys-48'-linked polyubiquitination is the major form, 'Lys-6'-linked and 'Lys-11'-linked polyubiquitination also occur. In terms of processing, O-glycosylated. O-GlcNAcylation content is around 8.2%. There is reciprocal down-regulation of phosphorylation and O-GlcNAcylation. Phosphorylation on Ser-717 completely abolishes the O-GlcNAcylation on this site, while phosphorylation on Ser-713 and Ser-721 reduces O-GlcNAcylation by a factor of 2 and 4 respectively. O-GlcNAcylation on Ser-717 decreases the phosphorylation on Ser-721 by about 41.5%. Post-translationally, glycation of PHF-tau, but not normal brain TAU/MAPT. Glycation is a non-enzymatic post-translational modification that involves a covalent linkage between a sugar and an amino group of a protein molecule forming ketoamine. Subsequent oxidation, fragmentation and/or cross-linking of ketoamine leads to the production of advanced glycation endproducts (AGES). Glycation may play a role in stabilizing PHF aggregation leading to tangle formation in AD. As to expression, expressed in neurons. Isoform PNS-tau is expressed in the peripheral nervous system while the others are expressed in the central nervous system.

It is found in the cytoplasm. The protein localises to the cytosol. Its subcellular location is the cell membrane. It localises to the cytoskeleton. The protein resides in the cell projection. It is found in the axon. The protein localises to the dendrite. Its subcellular location is the secreted. In terms of biological role, promotes microtubule assembly and stability, and might be involved in the establishment and maintenance of neuronal polarity. The C-terminus binds axonal microtubules while the N-terminus binds neural plasma membrane components, suggesting that tau functions as a linker protein between both. Axonal polarity is predetermined by TAU/MAPT localization (in the neuronal cell) in the domain of the cell body defined by the centrosome. The short isoforms allow plasticity of the cytoskeleton whereas the longer isoforms may preferentially play a role in its stabilization. The sequence is that of Microtubule-associated protein tau from Homo sapiens (Human).